Reading from the N-terminus, the 64-residue chain is Large ribosomal subunit protein bL35 (64 aa).

Residues 1–31 are disordered; sequence MPKMKTHSGAKKRFKLTGTGKLKRQQANRRH.

The protein belongs to the bacterial ribosomal protein bL35 family.

The protein is Large ribosomal subunit protein bL35 of Paenarthrobacter aurescens (strain TC1).